Consider the following 465-residue polypeptide: Lysosomal dipeptide transporter MFSD1 (465 aa).

Positions 1-23 (MEEEDEEARALLAGGPDEADRGA) are disordered. The Dileucine internalization motif motif lies at 11–12 (LL). The next 12 helical transmembrane spans lie at 39 to 59 (LAHR…SYFC), 83 to 103 (LLYA…GFLI), 113 to 133 (TIIF…GGIF), 135 to 155 (AFWL…SLAV), 170 to 191 (LNLV…NMNL), 213 to 233 (ITLM…LALA), 266 to 286 (LWLI…FIGL), 303 to 323 (SAIN…FGLL), 331 to 351 (IIWV…LAFT), 361 to 381 (LLGL…AFVV), 392 to 412 (FMQS…GMIL), and 418 to 438 (LFLE…VVLL).

The protein belongs to the major facilitator superfamily. Homodimer. Interacts with lysosomal protein GLMP (via lumenal domain); the interaction starts while both proteins are still in the endoplasmic reticulum and is required for stabilization of MFSD1 in lysosomes but has no direct effect on its targeting to lysosomes or transporter activity.

The protein localises to the lysosome membrane. The enzyme catalyses L-alpha-aminoacyl-L-arginine(out) = L-alpha-aminoacyl-L-arginine(in). The catalysed reaction is L-arginyl-L-alpha-amino acid(out) = L-arginyl-L-alpha-amino acid(in). It carries out the reaction L-arginyl-glycine(out) = L-arginyl-glycine(in). It catalyses the reaction L-alpha-aminoacyl-L-lysine(out) = L-alpha-aminoacyl-L-lysine(in). The enzyme catalyses L-aspartyl-L-lysine(out) = L-aspartyl-L-lysine(in). The catalysed reaction is L-alanyl-L-lysine(out) = L-alanyl-L-lysine(in). It carries out the reaction L-lysyl-L-alpha-amino acid(out) = L-lysyl-L-alpha-amino acid(in). It catalyses the reaction L-lysyl-L-alanine(out) = L-lysyl-L-alanine(in). The enzyme catalyses L-lysyl-L-lysine(out) = L-lysyl-L-lysine(in). The catalysed reaction is L-lysyl-glycine(out) = L-lysyl-glycine(in). It carries out the reaction L-alpha-aminoacyl-L-histidine(out) = L-alpha-aminoacyl-L-histidine(in). It catalyses the reaction L-histidyl-L-alpha-amino acid(out) = L-histidyl-L-alpha-amino acid(in). The enzyme catalyses L-histidyl-glycine(out) = L-histidyl-glycine(in). Functionally, lysosomal dipeptide uniporter that selectively exports lysine, arginine or histidine-containing dipeptides with a net positive charge from the lysosome lumen into the cytosol. Could play a role in a specific type of protein O-glycosylation indirectly regulating macrophages migration and tissue invasion. Also essential for liver homeostasis. The sequence is that of Lysosomal dipeptide transporter MFSD1 from Homo sapiens (Human).